The sequence spans 179 residues: Sperm surface protein Sp17 (179 aa).

Residues 72 to 109 (HAFKDEPPEKSETQKIQPEKVAIEKETMPQETVKEKET) are compositionally biased toward basic and acidic residues. Disordered regions lie at residues 72–138 (HAFK…EGLL) and 159–179 (TRKE…ENNE). Over residues 116–135 (EPTEEPQKEEEEEEDEEDLE) the composition is skewed to acidic residues. The region spanning 143-172 (MQDAAVKIQAVFRGHKTRKEYLKKRDSTDE) is the IQ domain. Over residues 161-170 (KEYLKKRDST) the composition is skewed to basic and acidic residues.

As to quaternary structure, homodimer. May interact with ROPN1. Testis- and sperm-specific.

The protein localises to the membrane. Functionally, sperm surface zona pellucida binding protein. Helps to bind spermatozoa to the zona pellucida with high affinity. Might function in binding zona pellucida and carbohydrates. The polypeptide is Sperm surface protein Sp17 (SPA17) (Monodelphis domestica (Gray short-tailed opossum)).